The following is a 70-amino-acid chain: Alpha-conotoxin EIIB (70 aa).

Residues 1–21 (MGMRMMFIVFLLVVLATTVVS) form the signal peptide. Residues 22–51 (FTLDHVLGLASEGRNAKAIDNALDQRDPKR) constitute a propeptide that is removed on maturation. Gln52 carries the pyrrolidone carboxylic acid modification. At Pro54 the chain carries Hydroxyproline. Intrachain disulfides connect Cys56–Cys62 and Cys57–Cys67. Cys67 carries the post-translational modification Cysteine amide.

In terms of tissue distribution, expressed by the venom duct.

Its subcellular location is the secreted. Its function is as follows. Alpha-conotoxins bind to the nicotinic acetylcholine receptors (nAChR) and inhibit them. This peptide potently blocks muscular nicotinic acetylcholine receptor (CHRNA1-CHRNB1-CHRNG-CHRND), and has no effect on neuronal receptors. It is able to totally displace [125I]-Bgtx from the Torpedo receptor with an inhibition constant (Ki) of 2.2 and 0.7 nM. This chain is Alpha-conotoxin EIIB, found in Conus ermineus (Agate cone).